Here is a 165-residue protein sequence, read N- to C-terminus: Lipoprotein signal peptidase (165 aa).

2 helical membrane passes run 66–86 (WQFW…LSLT) and 91–111 (NEPV…GNLV). Catalysis depends on residues aspartate 121 and aspartate 139. The chain crosses the membrane as a helical span at residues 132–152 (WPAFNVADIAICIGAFLAFVA).

This sequence belongs to the peptidase A8 family.

It localises to the cell inner membrane. It carries out the reaction Release of signal peptides from bacterial membrane prolipoproteins. Hydrolyzes -Xaa-Yaa-Zaa-|-(S,diacylglyceryl)Cys-, in which Xaa is hydrophobic (preferably Leu), and Yaa (Ala or Ser) and Zaa (Gly or Ala) have small, neutral side chains.. It participates in protein modification; lipoprotein biosynthesis (signal peptide cleavage). Functionally, this protein specifically catalyzes the removal of signal peptides from prolipoproteins. This Nitratidesulfovibrio vulgaris (strain DP4) (Desulfovibrio vulgaris) protein is Lipoprotein signal peptidase.